A 434-amino-acid polypeptide reads, in one-letter code: MREEGSELEMEKGFLKWKPVNLMKKILSLPMKKTKNDIGLRLDISYILVNLIVCSYPVNTYPKLLYRNSLDDLILFLTVYHGKGNFRIFNFRGEKEDSDYKDNDLIGIAAKFESKDFEIQELRSTLINDGKIPISPIDLETRTLVEEETNNVICERIGWLDHFPPPFELLEEIVDGIENYLSVSKNRVAVLHCRMGKGRSGMITVAYLMKYLQCPLGEARLIFMQARFKYGMTNGVTIPSQLRYLRYHEFFITHEKAAQEGISNEAVKFKFKFRLAKMTFLRPSSLITSESAIVTTKIQHYNDDRNALLTRKVVYSDIMAHECGGNMTFIFGRDYLTLENDCRIEFTLGTSKSKAASSIISWTSCASCWLNIYLETLMHIIKDDSSPDYFQVERLKRDEMLGTTISWQELDGFGELSTHGLKLFQALKLEWEII.

One can recognise a Phosphatase tensin-type domain in the interval 33–255; sequence KTKNDIGLRL…RYHEFFITHE (223 aa). The active-site Phosphocysteine intermediate is Cys193.

The catalysed reaction is a 1,2-diacyl-sn-glycero-3-phospho-(1D-myo-inositol-3,4,5-trisphosphate) + H2O = a 1,2-diacyl-sn-glycero-3-phospho-(1D-myo-inositol-4,5-bisphosphate) + phosphate. May act as a phosphoinositide 3-phosphatase by regulating PtdIns(3,4,5)P3 levels. The protein is Probable phosphatidylinositol 3,4,5-trisphosphate 3-phosphatase TEP1 (TEP1) of Saccharomyces cerevisiae (strain ATCC 204508 / S288c) (Baker's yeast).